Here is a 445-residue protein sequence, read N- to C-terminus: Argininosuccinate lyase (445 aa).

It belongs to the lyase 1 family. Argininosuccinate lyase subfamily.

The protein localises to the cytoplasm. It catalyses the reaction 2-(N(omega)-L-arginino)succinate = fumarate + L-arginine. It participates in amino-acid biosynthesis; L-arginine biosynthesis; L-arginine from L-ornithine and carbamoyl phosphate: step 3/3. In Xylella fastidiosa (strain 9a5c), this protein is Argininosuccinate lyase.